A 250-amino-acid polypeptide reads, in one-letter code: NADH-quinone oxidoreductase subunit C (250 aa).

It belongs to the complex I 30 kDa subunit family. NDH-1 is composed of 14 different subunits. Subunits NuoB, C, D, E, F, and G constitute the peripheral sector of the complex.

The protein resides in the cell inner membrane. It carries out the reaction a quinone + NADH + 5 H(+)(in) = a quinol + NAD(+) + 4 H(+)(out). Functionally, NDH-1 shuttles electrons from NADH, via FMN and iron-sulfur (Fe-S) centers, to quinones in the respiratory chain. The immediate electron acceptor for the enzyme in this species is believed to be ubiquinone. Couples the redox reaction to proton translocation (for every two electrons transferred, four hydrogen ions are translocated across the cytoplasmic membrane), and thus conserves the redox energy in a proton gradient. The protein is NADH-quinone oxidoreductase subunit C of Xylella fastidiosa (strain 9a5c).